The following is a 209-amino-acid chain: Xanthine phosphoribosyltransferase 1 (209 aa).

S79 carries the phosphoserine modification.

The protein resides in the cytoplasm. May act as a xanthine phosphoribosyltransferase involved in the synthesis of purine nucleotides. Such activity is however unclear in vivo. This chain is Xanthine phosphoribosyltransferase 1 (XPT1), found in Saccharomyces cerevisiae (strain ATCC 204508 / S288c) (Baker's yeast).